The following is a 227-amino-acid chain: PKHD-type hydroxylase Swit_4046 (227 aa).

The Fe2OG dioxygenase domain occupies 78-178 (KVFPPLFNLY…RLCSFFWIQS (101 aa)). Fe cation-binding residues include histidine 96, aspartate 98, and histidine 159. Residue arginine 169 participates in 2-oxoglutarate binding.

Fe(2+) serves as cofactor. Requires L-ascorbate as cofactor.

The protein is PKHD-type hydroxylase Swit_4046 of Rhizorhabdus wittichii (strain DSM 6014 / CCUG 31198 / JCM 15750 / NBRC 105917 / EY 4224 / RW1) (Sphingomonas wittichii).